Reading from the N-terminus, the 250-residue chain is 5-oxoprolinase subunit A (250 aa).

Belongs to the LamB/PxpA family. As to quaternary structure, forms a complex composed of PxpA, PxpB and PxpC.

The catalysed reaction is 5-oxo-L-proline + ATP + 2 H2O = L-glutamate + ADP + phosphate + H(+). Functionally, catalyzes the cleavage of 5-oxoproline to form L-glutamate coupled to the hydrolysis of ATP to ADP and inorganic phosphate. This is 5-oxoprolinase subunit A from Staphylococcus aureus (strain NCTC 8325 / PS 47).